A 199-amino-acid polypeptide reads, in one-letter code: Peptidyl-tRNA hydrolase (199 aa).

Tyrosine 18 serves as a coordination point for tRNA. Residue histidine 23 is the Proton acceptor of the active site. The tRNA site is built by tyrosine 72, asparagine 74, and asparagine 120.

This sequence belongs to the PTH family. Monomer.

The protein resides in the cytoplasm. The enzyme catalyses an N-acyl-L-alpha-aminoacyl-tRNA + H2O = an N-acyl-L-amino acid + a tRNA + H(+). Its function is as follows. Hydrolyzes ribosome-free peptidyl-tRNAs (with 1 or more amino acids incorporated), which drop off the ribosome during protein synthesis, or as a result of ribosome stalling. In terms of biological role, catalyzes the release of premature peptidyl moieties from peptidyl-tRNA molecules trapped in stalled 50S ribosomal subunits, and thus maintains levels of free tRNAs and 50S ribosomes. The polypeptide is Peptidyl-tRNA hydrolase (Bifidobacterium longum (strain DJO10A)).